Here is a 125-residue protein sequence, read N- to C-terminus: Class III hydrophobin G (125 aa).

Residues 1–20 form the signal peptide; that stretch reads MKPSIVTFLMLAAVTAAVSA. Disulfide bonds link C54/C107, C60/C101, C61/C94, and C108/C122.

It belongs to the fungal hydrophobin family. As to quaternary structure, self-assembles to form functional amyloid fibrils called rodlets. Self-assembly into fibrillar rodlets occurs spontaneously at hydrophobic:hydrophilic interfaces and the rodlets further associate laterally to form amphipathic monolayers.

Its subcellular location is the secreted. The protein localises to the cell wall. In terms of biological role, aerial growth, conidiation, and dispersal of filamentous fungi in the environment rely upon a capability of their secreting small amphipathic proteins called hydrophobins (HPBs) with low sequence identity. Class I can self-assemble into an outermost layer of rodlet bundles on aerial cell surfaces, conferring cellular hydrophobicity that supports fungal growth, development and dispersal; whereas Class II form highly ordered films at water-air interfaces through intermolecular interactions but contribute nothing to the rodlet structure. RodF and rodG belong to Class III, which contains hydrophobins with intermediate (between classes I and II) or atypical characteristics. RodG, unlike rodA, is not required for rodlet formation. In Aspergillus fumigatus (strain ATCC MYA-4609 / CBS 101355 / FGSC A1100 / Af293) (Neosartorya fumigata), this protein is Class III hydrophobin G.